Reading from the N-terminus, the 88-residue chain is MATKKSGGSSSNGRDSRGRRLGVKKFGSEKVIPGNIIIRQRGTKYHPGRNVGIGKDHTIFSKVSGVVYFRKGALNKTFVDVLEVNSAS.

The segment covering 1–13 has biased composition (low complexity); sequence MATKKSGGSSSNG. A disordered region spans residues 1–24; that stretch reads MATKKSGGSSSNGRDSRGRRLGVK.

Belongs to the bacterial ribosomal protein bL27 family.

The sequence is that of Large ribosomal subunit protein bL27 from Ehrlichia ruminantium (strain Gardel).